The chain runs to 105 residues: Large ribosomal subunit protein bL21 (105 aa).

Belongs to the bacterial ribosomal protein bL21 family. Part of the 50S ribosomal subunit. Contacts protein L20.

In terms of biological role, this protein binds to 23S rRNA in the presence of protein L20. The protein is Large ribosomal subunit protein bL21 of Aliarcobacter butzleri (strain RM4018) (Arcobacter butzleri).